Here is a 190-residue protein sequence, read N- to C-terminus: Potassium-transporting ATPase KdpC subunit (190 aa).

A helical transmembrane segment spans residues leucine 15–phenylalanine 35.

It belongs to the KdpC family. In terms of assembly, the system is composed of three essential subunits: KdpA, KdpB and KdpC.

It localises to the cell inner membrane. Its function is as follows. Part of the high-affinity ATP-driven potassium transport (or Kdp) system, which catalyzes the hydrolysis of ATP coupled with the electrogenic transport of potassium into the cytoplasm. This subunit acts as a catalytic chaperone that increases the ATP-binding affinity of the ATP-hydrolyzing subunit KdpB by the formation of a transient KdpB/KdpC/ATP ternary complex. In Synechocystis sp. (strain ATCC 27184 / PCC 6803 / Kazusa), this protein is Potassium-transporting ATPase KdpC subunit.